The following is a 196-amino-acid chain: Somatotropin (196 aa).

The N-terminal stretch at methionine 1–serine 16 is a signal peptide. Position 17 is a pyrrolidone carboxylic acid (glutamine 17). Histidine 35 is a binding site for Zn(2+). An intrachain disulfide couples cysteine 67 to cysteine 169. Residue glutamate 178 participates in Zn(2+) binding. Residues cysteine 186 and cysteine 194 are joined by a disulfide bond.

It belongs to the somatotropin/prolactin family.

It localises to the secreted. Its function is as follows. Growth hormone plays an important role in growth control and is involved in the regulation of several anabolic processes. Implicated as an osmoregulatory substance important for seawater adaptation. The polypeptide is Somatotropin (gh) (Takifugu rubripes (Japanese pufferfish)).